A 468-amino-acid polypeptide reads, in one-letter code: Chromosomal replication initiator protein DnaA (468 aa).

Positions 1–90 (MTQEKWGLLC…NSPMRPARAA (90 aa)) are domain I, interacts with DnaA modulators. Residues 91 to 126 (RPAAAAAAAAAAVEAPQVSAPRATDTSDVLDGLQAA) form a domain II region. Residues 127–348 (PLDPRFTFDS…GALTRLFAFA (222 aa)) form a domain III, AAA+ region region. 4 residues coordinate ATP: G171, G173, K174, and T175. Residues 349–468 (SLVGREIDME…VEMLRRALEA (120 aa)) form a domain IV, binds dsDNA region.

This sequence belongs to the DnaA family. In terms of assembly, oligomerizes as a right-handed, spiral filament on DNA at oriC.

It localises to the cytoplasm. Functionally, plays an essential role in the initiation and regulation of chromosomal replication. ATP-DnaA binds to the origin of replication (oriC) to initiate formation of the DNA replication initiation complex once per cell cycle. Binds the DnaA box (a 9 base pair repeat at the origin) and separates the double-stranded (ds)DNA. Forms a right-handed helical filament on oriC DNA; dsDNA binds to the exterior of the filament while single-stranded (ss)DNA is stabiized in the filament's interior. The ATP-DnaA-oriC complex binds and stabilizes one strand of the AT-rich DNA unwinding element (DUE), permitting loading of DNA polymerase. After initiation quickly degrades to an ADP-DnaA complex that is not apt for DNA replication. Binds acidic phospholipids. This is Chromosomal replication initiator protein DnaA from Ruegeria pomeroyi (strain ATCC 700808 / DSM 15171 / DSS-3) (Silicibacter pomeroyi).